We begin with the raw amino-acid sequence, 751 residues long: Photosystem I P700 chlorophyll a apoprotein A1 (751 aa).

A run of 8 helical transmembrane segments spans residues 73–96 (VFSAHFGQLGIIFIWLSGMYFHGA), 159–182 (LYTTAIGGLVMAAAMFFAGWFHYH), 198–222 (LNHHLAGLLGLGSLAWAGHQIHVSL), 294–312 (TVHHHLAIAVLFLVAGHQY), 349–372 (WHAQLAINLALFGSLSIIVSHHMY), 388–414 (LSLFTHHMWIGGFCIVGAGAHAGIFMV), 436–458 (AMISHLNWVCIFLGFHSFGLYIH), and 533–551 (FMVHHIHAFTIHVTVLILL). Residues Cys-575 and Cys-584 each contribute to the [4Fe-4S] cluster site. The next 2 helical transmembrane spans lie at 591 to 612 (HVFLGLFWMYNSISIVIFHFSW) and 665 to 687 (LSAYGLIFLGAHFVWAFSLMFLF). His-676 is a binding site for chlorophyll a'. The chlorophyll a site is built by Met-684 and Tyr-692. A phylloquinone-binding site is contributed by Trp-693. The helical transmembrane segment at 725-745 (AVGVAHYLLGGIATTWSFFLA) threads the bilayer.

This sequence belongs to the PsaA/PsaB family. As to quaternary structure, the PsaA/B heterodimer binds the P700 chlorophyll special pair and subsequent electron acceptors. PSI consists of a core antenna complex that captures photons, and an electron transfer chain that converts photonic excitation into a charge separation. The eukaryotic PSI reaction center is composed of at least 11 subunits. P700 is a chlorophyll a/chlorophyll a' dimer, A0 is one or more chlorophyll a, A1 is one or both phylloquinones and FX is a shared 4Fe-4S iron-sulfur center. serves as cofactor.

The protein resides in the plastid. It is found in the chloroplast thylakoid membrane. It catalyses the reaction reduced [plastocyanin] + hnu + oxidized [2Fe-2S]-[ferredoxin] = oxidized [plastocyanin] + reduced [2Fe-2S]-[ferredoxin]. Functionally, psaA and PsaB bind P700, the primary electron donor of photosystem I (PSI), as well as the electron acceptors A0, A1 and FX. PSI is a plastocyanin/cytochrome c6-ferredoxin oxidoreductase, converting photonic excitation into a charge separation, which transfers an electron from the donor P700 chlorophyll pair to the spectroscopically characterized acceptors A0, A1, FX, FA and FB in turn. Oxidized P700 is reduced on the lumenal side of the thylakoid membrane by plastocyanin or cytochrome c6. The sequence is that of Photosystem I P700 chlorophyll a apoprotein A1 from Chlorella vulgaris (Green alga).